A 271-amino-acid chain; its full sequence is RELT-like protein 1 (271 aa).

A signal peptide spans 1–23 (MAPRGLPGSAVLAAAVFVGGAVS). Topologically, residues 24–57 (SPLVRSDHSGSHPLPSKTETTPSPTNNNGNGHPE) are extracellular. Residues 27-52 (VRSDHSGSHPLPSKTETTPSPTNNNG) are disordered. The segment covering 36–52 (PLPSKTETTPSPTNNNG) has biased composition (low complexity). Residues 58 to 78 (YIAYALVPVFFVMGLFGVLIC) traverse the membrane as a helical segment. Residues 79-271 (HLLKKKGYRC…PVKRQQSDSE (193 aa)) lie on the Cytoplasmic side of the membrane. Phosphoserine occurs at positions 109 and 114. 2 disordered regions span residues 144 to 168 (CDPESPVTPSTPGSPPVSPGPLSPG) and 231 to 271 (TKVE…SDSE). Over residues 155-165 (PGSPPVSPGPL) the composition is skewed to pro residues. Basic and acidic residues predominate over residues 231–244 (TKVEPKSNQKERRS). 2 positions are modified to phosphoserine: Ser-244 and Ser-247.

It belongs to the RELT family. In terms of assembly, interacts with RELT, RELL2, OXSR1 and PLSCR1.

The protein resides in the cell membrane. Functionally, induces activation of MAPK14/p38 cascade, when overexpressed. Induces apoptosis, when overexpressed. The protein is RELT-like protein 1 (RELL1) of Bos taurus (Bovine).